A 345-amino-acid polypeptide reads, in one-letter code: Holliday junction branch migration complex subunit RuvB (345 aa).

A large ATPase domain (RuvB-L) region spans residues 1–182 (MQRLVEVESV…FGMHFRMQFY (182 aa)). ATP contacts are provided by residues Leu21, Arg22, Gly63, Lys66, Thr67, Thr68, 129–131 (EDY), Arg172, Tyr182, and Arg219. Residue Thr67 coordinates Mg(2+). The small ATPAse domain (RuvB-S) stretch occupies residues 183 to 253 (TEIELAKIIQ…RCKYALDELG (71 aa)). The segment at 256–345 (ESGFDEMDIN…EDDLTQGKLF (90 aa)) is head domain (RuvB-H). DNA-binding residues include Arg310 and Arg315.

This sequence belongs to the RuvB family. As to quaternary structure, homohexamer. Forms an RuvA(8)-RuvB(12)-Holliday junction (HJ) complex. HJ DNA is sandwiched between 2 RuvA tetramers; dsDNA enters through RuvA and exits via RuvB. An RuvB hexamer assembles on each DNA strand where it exits the tetramer. Each RuvB hexamer is contacted by two RuvA subunits (via domain III) on 2 adjacent RuvB subunits; this complex drives branch migration. In the full resolvosome a probable DNA-RuvA(4)-RuvB(12)-RuvC(2) complex forms which resolves the HJ.

The protein resides in the cytoplasm. The catalysed reaction is ATP + H2O = ADP + phosphate + H(+). Its function is as follows. The RuvA-RuvB-RuvC complex processes Holliday junction (HJ) DNA during genetic recombination and DNA repair, while the RuvA-RuvB complex plays an important role in the rescue of blocked DNA replication forks via replication fork reversal (RFR). RuvA specifically binds to HJ cruciform DNA, conferring on it an open structure. The RuvB hexamer acts as an ATP-dependent pump, pulling dsDNA into and through the RuvAB complex. RuvB forms 2 homohexamers on either side of HJ DNA bound by 1 or 2 RuvA tetramers; 4 subunits per hexamer contact DNA at a time. Coordinated motions by a converter formed by DNA-disengaged RuvB subunits stimulates ATP hydrolysis and nucleotide exchange. Immobilization of the converter enables RuvB to convert the ATP-contained energy into a lever motion, pulling 2 nucleotides of DNA out of the RuvA tetramer per ATP hydrolyzed, thus driving DNA branch migration. The RuvB motors rotate together with the DNA substrate, which together with the progressing nucleotide cycle form the mechanistic basis for DNA recombination by continuous HJ branch migration. Branch migration allows RuvC to scan DNA until it finds its consensus sequence, where it cleaves and resolves cruciform DNA. This is Holliday junction branch migration complex subunit RuvB from Aliarcobacter butzleri (strain RM4018) (Arcobacter butzleri).